The chain runs to 124 residues: Protein Rev (124 aa).

Phosphoserine; by host CK2 is present on serine 5. Residues 19–27 (IIKILYQSN) form a homomultimerization region. The segment at 25–51 (QSNPYPSPEGTRKARRNRRRRWRARQK) is disordered. Positions 35 to 51 (TRKARRNRRRRWRARQK) match the Nuclear localization signal and RNA-binding (RRE) motif. Over residues 37 to 50 (KARRNRRRRWRARQ) the composition is skewed to basic residues. The short motif at 74–85 (LELPELDKLSLQ) is the Nuclear export signal and binding to XPO1 element. A compositionally biased stretch (polar residues) spans 90 to 106 (TQDVGTSNTSQPQTATG). The interval 90-124 (TQDVGTSNTSQPQTATGETVPAGGNYSILGKGAKN) is disordered.

This sequence belongs to the HIV-1 REV protein family. In terms of assembly, homomultimer; when bound to the RRE. Multimeric assembly is essential for activity and may involve XPO1. Binds to human KPNB1, XPO1, TNPO1, RANBP5 and IPO7. Interacts with the viral Integrase. Interacts with human KHDRBS1. Interacts with human NAP1; this interaction decreases Rev multimerization and stimulates its activity. Interacts with human DEAD-box helicases DDX3 and DDX24; these interactions may serve for viral RNA export to the cytoplasm and packaging, respectively. Interacts with human PSIP1; this interaction may inhibit HIV-1 DNA integration by promoting dissociation of the Integrase-LEDGF/p75 complex. In terms of processing, asymmetrically arginine dimethylated at one site by host PRMT6. Methylation impairs the RNA-binding activity and export of viral RNA from the nucleus to the cytoplasm. Phosphorylated by protein kinase CK2. Presence of, and maybe binding to the N-terminus of the regulatory beta subunit of CK2 is necessary for CK2-mediated Rev's phosphorylation.

It localises to the host nucleus. The protein resides in the host nucleolus. It is found in the host cytoplasm. In terms of biological role, escorts unspliced or incompletely spliced viral pre-mRNAs (late transcripts) out of the nucleus of infected cells. These pre-mRNAs carry a recognition sequence called Rev responsive element (RRE) located in the env gene, that is not present in fully spliced viral mRNAs (early transcripts). This function is essential since most viral proteins are translated from unspliced or partially spliced pre-mRNAs which cannot exit the nucleus by the pathway used by fully processed cellular mRNAs. Rev itself is translated from a fully spliced mRNA that readily exits the nucleus. Rev's nuclear localization signal (NLS) binds directly to KPNB1/Importin beta-1 without previous binding to KPNA1/Importin alpha-1. KPNB1 binds to the GDP bound form of RAN (Ran-GDP) and targets Rev to the nucleus. In the nucleus, the conversion from Ran-GDP to Ran-GTP dissociates Rev from KPNB1 and allows Rev's binding to the RRE in viral pre-mRNAs. Rev multimerization on the RRE via cooperative assembly exposes its nuclear export signal (NES) to the surface. Rev can then form a complex with XPO1/CRM1 and Ran-GTP, leading to nuclear export of the complex. Conversion from Ran-GTP to Ran-GDP mediates dissociation of the Rev/RRE/XPO1/RAN complex, so that Rev can return to the nucleus for a subsequent round of export. Beside KPNB1, also seems to interact with TNPO1/Transportin-1, RANBP5/IPO5 and IPO7/RANBP7 for nuclear import. The nucleoporin-like HRB/RIP is an essential cofactor that probably indirectly interacts with Rev to release HIV RNAs from the perinuclear region to the cytoplasm. The sequence is that of Protein Rev from Pan (chimpanzees).